A 32-amino-acid polypeptide reads, in one-letter code: ADSLTQFDGIKGRYSHEAFYEEKACDSCHLNK.

Heme-binding residues include His16, Cys25, Cys28, and His29.

In terms of assembly, monomer. In terms of processing, binds 1 heme group per subunit.

The protein localises to the periplasm. Participates in sulfate respiration coupled with phosphorylation by transferring electrons from the enzyme dehydrogenase to ferredoxin. This Desulfuromonas acetoxidans (Chloropseudomonas ethylica) protein is Cytochrome c3, 10 kDa.